A 111-amino-acid chain; its full sequence is Universal stress protein B (111 aa).

Transmembrane regions (helical) follow at residues Met1–Arg21 and Phe90–Trp110.

The protein belongs to the universal stress protein B family.

Its subcellular location is the cell inner membrane. The protein is Universal stress protein B of Yersinia enterocolitica serotype O:8 / biotype 1B (strain NCTC 13174 / 8081).